The primary structure comprises 90 residues: Small ribosomal subunit protein bS16 (90 aa).

It belongs to the bacterial ribosomal protein bS16 family.

This chain is Small ribosomal subunit protein bS16, found in Bacillus cytotoxicus (strain DSM 22905 / CIP 110041 / 391-98 / NVH 391-98).